Reading from the N-terminus, the 185-residue chain is Ribosome-recycling factor (185 aa).

Belongs to the RRF family.

Its subcellular location is the cytoplasm. Its function is as follows. Responsible for the release of ribosomes from messenger RNA at the termination of protein biosynthesis. May increase the efficiency of translation by recycling ribosomes from one round of translation to another. This is Ribosome-recycling factor from Buchnera aphidicola subsp. Schizaphis graminum (strain Sg).